The following is a 1049-amino-acid chain: Multidrug efflux pump subunit AcrB (1049 aa).

Residues 1–9 (MPNFFIDRP) are Cytoplasmic-facing. A helical membrane pass occupies residues 10 to 28 (IFAWVIAIIIMLAGGLAIL). The Periplasmic segment spans residues 29–336 (KLPVAQYPTI…YDTTPFVKIS (308 aa)). The chain crosses the membrane as a helical span at residues 337-356 (IHEVVKTLVEAIILVFLVMY). The Cytoplasmic segment spans residues 357-365 (LFLQNFRAT). Residues 366-385 (LIPTIAVPVVLLGTFAVLAA) traverse the membrane as a helical segment. The Periplasmic portion of the chain corresponds to 386 to 391 (FGFSIN). Residues 392–413 (TLTMFGMVLAIGLLVDDAIVVV) traverse the membrane as a helical segment. The Cytoplasmic segment spans residues 414–438 (ENVERVMAEEGLPPKEATRKSMGQI). Residues 439-457 (QGALVGIAMVLSAVFVPMA) form a helical membrane-spanning segment. The Periplasmic portion of the chain corresponds to 458–465 (FFGGSTGA). Residues 466 to 490 (IYRQFSITIVSAMALSVLVALILTP) form a helical membrane-spanning segment. Residues 491-538 (ALCATMLKPIAKGDHGEGKKGFFGWFNRMFEKSTHHYTDSVGGILRST) are Cytoplasmic-facing. A helical membrane pass occupies residues 539–555 (GRYLVLYLIIVVGMAYL). Residues 556-871 (FVRLPSSFLP…MSYQERLSGN (316 aa)) lie on the Periplasmic side of the membrane. The chain crosses the membrane as a helical span at residues 872-888 (QAPSLYAISLIVVFLCL). Topologically, residues 889–898 (AALYESWSIP) are cytoplasmic. The chain crosses the membrane as a helical span at residues 899–918 (FSVMLVVPLGVIGALLAATF). Over 919–924 (RGLTND) the chain is Periplasmic. The helical transmembrane segment at 925–943 (VYFQVGLLTTIGLSAKNAI) threads the bilayer. The Cytoplasmic segment spans residues 944–972 (LIVEFAKDLMDKEGKGLIEATLDAVRMRL). Residues 973 to 992 (RPILMTSLAFILGVMPLVIS) traverse the membrane as a helical segment. Residues 993 to 998 (TGAGSG) lie on the Periplasmic side of the membrane. A helical membrane pass occupies residues 999–1018 (AQNAVGTGVMGGMVTATVLA). The Cytoplasmic segment spans residues 1019 to 1049 (IFFVPVFFVVVRRRFSRKNEDIEHSHTVDHH).

Belongs to the resistance-nodulation-cell division (RND) (TC 2.A.6) family. In terms of assembly, homotrimer, with large domains that extend into the periplasm, interacts with AcrA and TolC. AcrA may be required to stably link this protein and TolC. Interacts with AcrZ. Part of the AcrA-AcrB-AcrZ-TolC efflux pump.

It localises to the cell inner membrane. In terms of biological role, acrA-AcrB-AcrZ-TolC is a drug efflux protein complex with broad substrate specificity that uses the proton motive force to export substrates. (Microbial infection) Involved in contact-dependent growth inhibition (CDI), acts downstream of BamA, the receptor for CDI. Its role in CDI is independent of the AcrA-AcrB-TolC efflux pump complex. The protein is Multidrug efflux pump subunit AcrB (acrB) of Escherichia coli (strain K12).